The following is a 769-amino-acid chain: MLRQRPQLLLLAGLLALQSVLSQECTNYKVSTCRDCIESGPGCAWCQKLNFTGQGEPDSIRCDTRAELLSKGCPADDIMEPKSLAETRDSQAGSRKQLSPQEVTLYLRPGQAVAFNVTFRRAKGYPIDLYYLMDLSYSMVDDLVNVKKLGGDLLRALNGITESGRIGFGSFVDKTVLPFVNTHPEKLRNPCPNKEKECQPPFAFRHVLKLTDNSKQFETEVGKQLISGNLDAPEGGLDAMMQVAACPEEIGWRNVTRLLVFATDDGFHFAGDGKLGAILTPNDGRCHLEDNLYKSSNEFDYPSVGQLAHKLAESNIQPIFAVTKKMVKTYEKLTEIIPKSAVGELSEDSRNVVELIKNAYNKLSSRVFLDHSTLPDTLKVTYDSFCSNGKSQVDQPRGDCDGVQINVPITFQVKVTATECIQQQSFTIRALGFTDTVTVRVLPQCECQCRDASRDGSICGGRGSMECGVCRCDAGYIGKNCECQTQGRSSQELEGSCRKDNSSIICSGLGDCICGQCVCHTSDVPNKKIYGQFCECDNVNCERYDGQVCGGEKRGLCFCGTCRCDEQYEGSACQCLKSTQGCLNLDGVECSGRGRCRCNVCQCDPGYQPPLCSECPGCPVPCAGFAPCTECLKFDKGPFAKNCSAACGQTKLLSSPVPGRKCKERDSEGCWMTYTLVQRDGRDRYDVHVDDMLECVKGPNIAAIVGGTVGGVVLVGILLLVIWKALTHLSDLREYHRFEKEKLKSQWNNDNPLFKSATTTVMNPKFAES.

A signal peptide spans 1 to 22 (MLRQRPQLLLLAGLLALQSVLS). Glutamine 23 bears the Pyrrolidone carboxylic acid mark. Residues 23 to 700 (QECTNYKVST…DMLECVKGPN (678 aa)) lie on the Extracellular side of the membrane. The PSI domain occupies 24–74 (ECTNYKVSTCRDCIESGPGCAWCQKLNFTGQGEPDSIRCDTRAELLSKGCP). 28 disulfide bridges follow: cysteine 25–cysteine 43, cysteine 33–cysteine 447, cysteine 36–cysteine 62, cysteine 46–cysteine 73, cysteine 191–cysteine 198, cysteine 246–cysteine 286, cysteine 386–cysteine 400, cysteine 420–cysteine 445, cysteine 449–cysteine 467, cysteine 459–cysteine 470, cysteine 472–cysteine 481, cysteine 483–cysteine 514, cysteine 497–cysteine 512, cysteine 506–cysteine 517, cysteine 519–cysteine 534, cysteine 536–cysteine 559, cysteine 541–cysteine 557, cysteine 549–cysteine 562, cysteine 564–cysteine 573, cysteine 575–cysteine 598, cysteine 582–cysteine 596, cysteine 590–cysteine 601, cysteine 603–cysteine 612, cysteine 615–cysteine 618, cysteine 622–cysteine 662, cysteine 628–cysteine 647, cysteine 631–cysteine 643, and cysteine 670–cysteine 695. Residues asparagine 50 and asparagine 116 are each glycosylated (N-linked (GlcNAc...) asparagine). In terms of domain architecture, VWFA spans 124 to 363 (GYPIDLYYLM…ELIKNAYNKL (240 aa)). Residues serine 136 and serine 138 each contribute to the Mg(2+) site. Positions 138, 141, 142, and 173 each coordinate Ca(2+). The Ca(2+) site is built by asparagine 229, aspartate 231, proline 233, and glutamate 234. Position 234 (glutamate 234) interacts with Mg(2+). An N-linked (GlcNAc...) asparagine glycan is attached at asparagine 254. Residues aspartate 264 and glutamate 347 each contribute to the Ca(2+) site. A Cell attachment site motif is present at residues 397-399 (RGD). 4 consecutive I-EGF domains span residues 449 to 482 (CRDA…KNCE), 483 to 535 (CQTQ…QFCE), 536 to 574 (CDNV…SACQ), and 575 to 613 (CLKS…PLCS). An N-linked (GlcNAc...) asparagine glycan is attached at asparagine 501. Asparagine 642 is a glycosylation site (N-linked (GlcNAc...) asparagine). Residues 701–723 (IAAIVGGTVGGVVLVGILLLVIW) form a helical membrane-spanning segment. Over 724–769 (KALTHLSDLREYHRFEKEKLKSQWNNDNPLFKSATTTVMNPKFAES) the chain is Cytoplasmic. 2 positions are modified to phosphoserine: serine 745 and serine 756. Residues threonine 758 and threonine 760 each carry the phosphothreonine modification.

This sequence belongs to the integrin beta chain family. As to quaternary structure, heterodimer of an alpha and a beta subunit. The ITGB2 beta subunit associates with the ITGAL, ITGAM, ITGAX or ITGAD alpha subunits. Found in a complex with CD177 and ITGAM/CD11b. Interacts with FGR. Interacts with COPS5 and RANBP9. Interacts with FLNA (via filamin repeats 4, 9, 12, 17, 19, 21, and 23). Interacts with THBD. Both Ser-745 and Ser-756 become phosphorylated when T-cells are exposed to phorbol esters. Phosphorylation on Thr-758 (but not on Ser-756) allows interaction with 14-3-3 proteins.

It localises to the cell membrane. The protein localises to the membrane raft. Functionally, integrin ITGAL/ITGB2 is a receptor for ICAM1, ICAM2, ICAM3 and ICAM4. Integrin ITGAL/ITGB2 is also a receptor for the secreted form of ubiquitin-like protein ISG15; the interaction is mediated by ITGAL. Integrins ITGAM/ITGB2 and ITGAX/ITGB2 are receptors for the iC3b fragment of the third complement component and for fibrinogen. Integrin ITGAX/ITGB2 recognizes the sequence G-P-R in fibrinogen alpha-chain. Integrin ITGAM/ITGB2 recognizes P1 and P2 peptides of fibrinogen gamma chain. Integrin ITGAM/ITGB2 is also a receptor for factor X. Integrin ITGAD/ITGB2 is a receptor for ICAM3 and VCAM1. Contributes to natural killer cell cytotoxicity. Involved in leukocyte adhesion and transmigration of leukocytes including T-cells and neutrophils. Triggers neutrophil transmigration during lung injury through PTK2B/PYK2-mediated activation. Integrin ITGAL/ITGB2 in association with ICAM3, contributes to apoptotic neutrophil phagocytosis by macrophages. The protein is Integrin beta-2 (ITGB2) of Bos taurus (Bovine).